Consider the following 445-residue polypeptide: MSTILESLPTGQKVGIAFSGGLDTSAALHWMKLKGAVPYAYTANLGQPDEDDYDAIPKRALEYGAAGARLIDCRAQLVAEGIAALQSGAFHITTAGVTYFNTTPIGRAVTGTMLVAAMKEDGVNIWGDGSTYKGNDIERFYRYGLLVNPDLKIYKPWLDQTFIDELGGRAEMSEFMRQSGFAYKMSAEKAYSTDSNLLGATHEAKDLESLESGIKIVNPIMGVAFWRDDVKIAAEEVTVRFEAGQPVALNGVEFKDQVELLLEANRIGGRHGLGMSDQIENRIIEAKSRGIYEAPGLALLYIAYERLVTGIHNEDTIEQYRENGRRLGRLLYQGRWFDPQAIMLRETAQRWVARAITGEVKIELRRGNDYSILSTKSPNLTYQPERLSMEKVASTFSPRDRIGQLTMRNLDITDTRDKLRVYTQVGLLTPGEASALPQIKGDSGE.

ATP is bound by residues 17–25 and alanine 43; that span reads AFSGGLDTS. An L-citrulline-binding site is contributed by tyrosine 99. Residues glycine 129 and threonine 131 each contribute to the ATP site. Residues threonine 131, asparagine 135, and aspartate 136 each contribute to the L-aspartate site. An L-citrulline-binding site is contributed by asparagine 135. Aspartate 136 lines the ATP pocket. L-citrulline is bound by residues arginine 139 and serine 192. Aspartate 194 is a binding site for ATP. L-citrulline-binding residues include threonine 201, glutamate 203, and glutamate 280.

This sequence belongs to the argininosuccinate synthase family. Type 2 subfamily. Homotetramer.

It is found in the cytoplasm. The enzyme catalyses L-citrulline + L-aspartate + ATP = 2-(N(omega)-L-arginino)succinate + AMP + diphosphate + H(+). Its pathway is amino-acid biosynthesis; L-arginine biosynthesis; L-arginine from L-ornithine and carbamoyl phosphate: step 2/3. The protein is Argininosuccinate synthase (argG) of Burkholderia multivorans (strain ATCC 17616 / 249).